The chain runs to 396 residues: Tyrosine--tRNA ligase (396 aa).

A 'HIGH' region motif is present at residues 43-52 (PSSPDIHLGH). Residues 227-231 (KMSKS) carry the 'KMSKS' region motif. Lysine 230 serves as a coordination point for ATP. Positions 338–396 (ICVIDFIIKADLAKSKSEARRLLEQGGVEINSAKISDPGTTVKCGDIIKAGKRRYSKAV) constitute an S4 RNA-binding domain.

The protein belongs to the class-I aminoacyl-tRNA synthetase family. TyrS type 2 subfamily. Homodimer.

It localises to the cytoplasm. It carries out the reaction tRNA(Tyr) + L-tyrosine + ATP = L-tyrosyl-tRNA(Tyr) + AMP + diphosphate + H(+). Catalyzes the attachment of tyrosine to tRNA(Tyr) in a two-step reaction: tyrosine is first activated by ATP to form Tyr-AMP and then transferred to the acceptor end of tRNA(Tyr). This is Tyrosine--tRNA ligase from Dehalococcoides mccartyi (strain ATCC BAA-2266 / KCTC 15142 / 195) (Dehalococcoides ethenogenes (strain 195)).